The chain runs to 615 residues: DNA mismatch repair protein MutL (615 aa).

The protein belongs to the DNA mismatch repair MutL/HexB family.

Functionally, this protein is involved in the repair of mismatches in DNA. It is required for dam-dependent methyl-directed DNA mismatch repair. May act as a 'molecular matchmaker', a protein that promotes the formation of a stable complex between two or more DNA-binding proteins in an ATP-dependent manner without itself being part of a final effector complex. This chain is DNA mismatch repair protein MutL, found in Histophilus somni (strain 2336) (Haemophilus somnus).